A 123-amino-acid polypeptide reads, in one-letter code: MAVSKEDVLEFISGLSVLELSELVKEFEEKFGVSAQPVAVAGGAVAAVEAVEEKTEFDVIIVDSGDKKINVIKEIRAITGLGLKEAKDAAEQTPSTIKEGISKADAEAFKAQLEAAGAKVEVK.

The protein belongs to the bacterial ribosomal protein bL12 family. Homodimer. Part of the ribosomal stalk of the 50S ribosomal subunit. Forms a multimeric L10(L12)X complex, where L10 forms an elongated spine to which 2 to 4 L12 dimers bind in a sequential fashion. Binds GTP-bound translation factors.

In terms of biological role, forms part of the ribosomal stalk which helps the ribosome interact with GTP-bound translation factors. Is thus essential for accurate translation. In Aliarcobacter butzleri (strain RM4018) (Arcobacter butzleri), this protein is Large ribosomal subunit protein bL12.